Consider the following 295-residue polypeptide: Ribosomal RNA small subunit methyltransferase A (295 aa).

S-adenosyl-L-methionine contacts are provided by Asn29, Leu31, Gly56, Glu77, Asp102, and Asn128.

The protein belongs to the class I-like SAM-binding methyltransferase superfamily. rRNA adenine N(6)-methyltransferase family. RsmA subfamily.

The protein localises to the cytoplasm. It carries out the reaction adenosine(1518)/adenosine(1519) in 16S rRNA + 4 S-adenosyl-L-methionine = N(6)-dimethyladenosine(1518)/N(6)-dimethyladenosine(1519) in 16S rRNA + 4 S-adenosyl-L-homocysteine + 4 H(+). Its function is as follows. Specifically dimethylates two adjacent adenosines (A1518 and A1519) in the loop of a conserved hairpin near the 3'-end of 16S rRNA in the 30S particle. May play a critical role in biogenesis of 30S subunits. The chain is Ribosomal RNA small subunit methyltransferase A from Listeria monocytogenes serovar 1/2a (strain ATCC BAA-679 / EGD-e).